A 363-amino-acid polypeptide reads, in one-letter code: NADH-quinone oxidoreductase subunit H (363 aa).

Transmembrane regions (helical) follow at residues 29-49, 62-82, 96-116, 127-147, 163-183, 202-222, 239-257, 264-286, 299-319, and 339-359; these read VLKI…YVVW, GPMY…KLLF, FIIA…VVPF, VGLL…ILAG, AAQV…VMIA, FFDW…VSGV, IVAG…LFFL, ILVS…QGWV, TGGW…YIWF, and FIPL…YGVI.

Belongs to the complex I subunit 1 family. As to quaternary structure, NDH-1 is composed of 14 different subunits. Subunits NuoA, H, J, K, L, M, N constitute the membrane sector of the complex.

It is found in the cell inner membrane. It catalyses the reaction a quinone + NADH + 5 H(+)(in) = a quinol + NAD(+) + 4 H(+)(out). Its function is as follows. NDH-1 shuttles electrons from NADH, via FMN and iron-sulfur (Fe-S) centers, to quinones in the respiratory chain. The immediate electron acceptor for the enzyme in this species is believed to be ubiquinone. Couples the redox reaction to proton translocation (for every two electrons transferred, four hydrogen ions are translocated across the cytoplasmic membrane), and thus conserves the redox energy in a proton gradient. This subunit may bind ubiquinone. This Xanthomonas campestris pv. campestris (strain 8004) protein is NADH-quinone oxidoreductase subunit H.